Reading from the N-terminus, the 192-residue chain is Interleukin-18 (192 aa).

Residues 1-35 (MAAEPVEDNCISFVEMKFINNTLYFVAENGDLESD) constitute a propeptide that is removed on maturation.

The protein belongs to the IL-1 family. As to quaternary structure, forms a ternary complex with ligand-binding receptor subunit IL18R1 and signaling receptor subunit IL18RAP at the plasma membrane. Mature IL18 first binds to IL18R1 forming a low affinity binary complex, which then interacts with IL18RAP to form a high affinity ternary complex that signals inside the cell. Interacts with cargo receptor TMED10; the interaction mediates the translocation from the cytoplasm into the ERGIC (endoplasmic reticulum-Golgi intermediate compartment) and thereby secretion. The pro-IL-18 precursor is processed by CASP1, CASP4 or CASP5 to yield its mature, active form. The pro-IL-18 precursor features autoinhibitory interactions between the propeptide and the post-cleavage-site region, preventing recognition by the IL18R1 receptor. Processing by CASP1, CASP4 or CASP5 induces conformational changes to generate critical receptor-binding sites. The mature form is then secreted and released in the extracellular milieu by passing through the gasdermin-D (GSDMD) pore. In contrast, cleavage by CASP3 inactivates IL18.

It is found in the cytoplasm. The protein localises to the cytosol. The protein resides in the secreted. In terms of biological role, pro-inflammatory cytokine primarily involved in epithelial barrier repair, polarized T-helper 1 (Th1) cell and natural killer (NK) cell immune responses. Upon binding to IL18R1 and IL18RAP, forms a signaling ternary complex which activates NF-kappa-B, triggering synthesis of inflammatory mediators. Synergizes with IL12/interleukin-12 to induce IFNG synthesis from T-helper 1 (Th1) cells and natural killer (NK) cells. Involved in transduction of inflammation downstream of pyroptosis: its mature form is specifically released in the extracellular milieu by passing through the gasdermin-D (GSDMD) pore. The chain is Interleukin-18 (IL18) from Capra hircus (Goat).